Consider the following 421-residue polypeptide: FAD-dependent monooxygenase atnJ (421 aa).

Residues 9–29 (LVPLHVVIVGAGIGGLSAAVA) form a helical membrane-spanning segment. Residues Glu-41 and Ala-54 each contribute to the FAD site. Arg-188 is an active-site residue. Asp-303 and Val-316 together coordinate FAD. The disordered stretch occupies residues 371-392 (RDGDAQAARDSQRKATSGTGQN).

Belongs to the paxM FAD-dependent monooxygenase family. FAD serves as cofactor.

It is found in the membrane. The protein operates within secondary metabolite biosynthesis; terpenoid biosynthesis. Its function is as follows. FAD-dependent monooxygenase; part of the gene cluster that mediates the biosynthesis of the meroterpenoids arthripenoids. The pathway begins with the HR-PKS atnH that catalyzes two chain-extension steps to form a reduced triketide, which then primes the SAT domain in the NR-PKS atnG to initiate three more cycles of extension to give a linear hexaketide corresponding to the polyketide part of arthripenoids. The FAD-dependent monooxygenase atnJ then performs an oxidative decarboxylation at C11 of the atnH/atnG product, via an electrophilic aromatic hydroxylation with concomitant ipso-decarboxylation. The membrane-bound polyprenyl transferase atnF then introduces a farnesyl group before the FAD-dependent monooxygenase atnK functions as the first epoxidase on terminal C12'-C13' olefin, followed by a second epoxidation on C7'-C8' catalyzed by atnA. The terpene cyclase/mutase atnI then initiates the sequential tricyclic ring formation through protonation of the terminal epoxide and catalyzes the regioselective and stereoselective 6/6/6-tricyclic ring formation. The cytochrome P450 monooxygenase atnM is responsible for hydroxylating both C1' and C10'. The next steps may involve ketoreduction and acetyl transfer by the ketoreductase atnB and the acetyltransferase atnC, and lead to the production of arthripenoid B, the final biosynthetic product of the atn cluster. The hydroquinone moiety in arthripenoid B is prone to undergo spontaneous oxidation to afford a benzoquinone compound, a key intermediate for generating structure diversity. For instance, addition of a cysteine followed by ring contraction gives arthripenoid A, tautomerization gives the main product arthripenoid C, addition of a molecular of water or amine affords arthripenoid D or E, respectively, and loss of one water forms arthripenoid F. The protein is FAD-dependent monooxygenase atnJ of Arthrinium sp.